Here is a 98-residue protein sequence, read N- to C-terminus: Co-chaperonin GroES (98 aa).

It belongs to the GroES chaperonin family. As to quaternary structure, heptamer of 7 subunits arranged in a ring. Interacts with the chaperonin GroEL.

It is found in the cytoplasm. In terms of biological role, together with the chaperonin GroEL, plays an essential role in assisting protein folding. The GroEL-GroES system forms a nano-cage that allows encapsulation of the non-native substrate proteins and provides a physical environment optimized to promote and accelerate protein folding. GroES binds to the apical surface of the GroEL ring, thereby capping the opening of the GroEL channel. The protein is Co-chaperonin GroES of Corynebacterium diphtheriae (strain ATCC 700971 / NCTC 13129 / Biotype gravis).